The primary structure comprises 121 residues: Large ribosomal subunit protein uL22 (121 aa).

It belongs to the universal ribosomal protein uL22 family. In terms of assembly, part of the 50S ribosomal subunit.

Functionally, this protein binds specifically to 23S rRNA; its binding is stimulated by other ribosomal proteins, e.g. L4, L17, and L20. It is important during the early stages of 50S assembly. It makes multiple contacts with different domains of the 23S rRNA in the assembled 50S subunit and ribosome. In terms of biological role, the globular domain of the protein is located near the polypeptide exit tunnel on the outside of the subunit, while an extended beta-hairpin is found that lines the wall of the exit tunnel in the center of the 70S ribosome. The sequence is that of Large ribosomal subunit protein uL22 from Synechococcus sp. (strain CC9902).